The sequence spans 62 residues: Beta-defensin 33 (62 aa).

A signal peptide spans 1–20 (MRLLFLLFLLLVCLAQKTSG). 3 disulfide bridges follow: Cys-30-Cys-59, Cys-37-Cys-52, and Cys-45-Cys-60.

The protein belongs to the beta-defensin family.

The protein resides in the secreted. Has antibacterial activity. This is Beta-defensin 33 (Defb33) from Rattus norvegicus (Rat).